The primary structure comprises 290 residues: MRSFSFTKMHGLGNSYIYVDLFRETLPEEELPAIARSVADVHTGIGSDGLILICPSEKAPVKMRIFNSDGSEGKNCGNGLRCVAKYAYEHGIVSDRTFLIETLSGLVEARVAVADGEVTSVTVDMGEPRLERSAIPMLGPEAERVVAEPFAIAGGEYEITAVSMGNPHVIFYVDDIQKAPVTTLGPLVEKDPRFPEGVNVEFVEVVNERELHFRVWERGSGVTQACGTGACAAVVASVLNGKTARGEETVVHLAGGDLTIVWGHDGRVRMTGPAETVCTGVYYYRGGRNG.

2 residues coordinate substrate: asparagine 14 and asparagine 67. Cysteine 76 serves as the catalytic Proton donor. Substrate is bound by residues 77-78 (GN), asparagine 166, asparagine 199, and 217-218 (ER). Cysteine 226 functions as the Proton acceptor in the catalytic mechanism. Residue 227–228 (GT) participates in substrate binding.

The protein belongs to the diaminopimelate epimerase family. In terms of assembly, homodimer.

Its subcellular location is the cytoplasm. The catalysed reaction is (2S,6S)-2,6-diaminopimelate = meso-2,6-diaminopimelate. Its pathway is amino-acid biosynthesis; L-lysine biosynthesis via DAP pathway; DL-2,6-diaminopimelate from LL-2,6-diaminopimelate: step 1/1. Catalyzes the stereoinversion of LL-2,6-diaminopimelate (L,L-DAP) to meso-diaminopimelate (meso-DAP), a precursor of L-lysine and an essential component of the bacterial peptidoglycan. The chain is Diaminopimelate epimerase from Geobacillus kaustophilus (strain HTA426).